A 203-amino-acid chain; its full sequence is MRPFTRETGLAVPLDRVNVDTDQIIPKQFLKRIERTGFGQFLFHDWRYLPDGSPNPEFVLNRPQYAGATILIAGRNFGSGSSREHAPWALSDYGFRAIIAPSFADIFYNNCFQNGLLPVVLPEEAVAELMRRAQEPGYRLTVDLERCVVEDDAGFRVDFAIDAFRRHRMLHGLDDIGLTLQYEDEIAAYEARRPAWLPTTPAR.

The protein belongs to the LeuD family. LeuD type 1 subfamily. As to quaternary structure, heterodimer of LeuC and LeuD.

The enzyme catalyses (2R,3S)-3-isopropylmalate = (2S)-2-isopropylmalate. The protein operates within amino-acid biosynthesis; L-leucine biosynthesis; L-leucine from 3-methyl-2-oxobutanoate: step 2/4. Functionally, catalyzes the isomerization between 2-isopropylmalate and 3-isopropylmalate, via the formation of 2-isopropylmaleate. This is 3-isopropylmalate dehydratase small subunit from Symbiobacterium thermophilum (strain DSM 24528 / JCM 14929 / IAM 14863 / T).